We begin with the raw amino-acid sequence, 49 residues long: MRKKITLACKDCGSRNYTTMKSDASAAERLEVKKYCKTCNSHKTHLETK.

Belongs to the bacterial ribosomal protein bL33 family.

The polypeptide is Large ribosomal subunit protein bL33A (Bacillus pumilus (strain SAFR-032)).